Consider the following 187-residue polypeptide: Ribosome-recycling factor (187 aa).

The protein belongs to the RRF family.

The protein localises to the cytoplasm. Its function is as follows. Responsible for the release of ribosomes from messenger RNA at the termination of protein biosynthesis. May increase the efficiency of translation by recycling ribosomes from one round of translation to another. The chain is Ribosome-recycling factor from Methylobacterium radiotolerans (strain ATCC 27329 / DSM 1819 / JCM 2831 / NBRC 15690 / NCIMB 10815 / 0-1).